Here is a 344-residue protein sequence, read N- to C-terminus: MSKDVRQLLDKTYGGNPLSREEAKCLFASLVRGELDEVTIAALLMALKVRGETIDEISGAADAMREAANSFPRPALDGGILDIVGTGGDGFNTINISTTATFVAAAAGANVAKHGNRSVSSKSGSSDLLGQFGIELTMAPQTAANCLEALGICFLFAPHYHGGVKHAVPVRQKLATRTLFNVLGPLINPSHPDFMLLGVYSETLVRPIAEVLCALGVKRAMVVHGEGLDEVALHGTTQVCELRNGELVDYSLSPKDFGLEPVQVTELEGGSPEDNALITAAILKGEGKAAHRDAVALNAGCALYVAGLADTPQAGFKLAIDTLASGKAYEKLIGLAAMSQQDKA.

5-phospho-alpha-D-ribose 1-diphosphate contacts are provided by residues glycine 85, 88 to 89, threonine 93, 95 to 98, 113 to 121, and serine 125; these read GD, NIST, and KHGNRSVSS. Glycine 85 serves as a coordination point for anthranilate. Serine 97 provides a ligand contact to Mg(2+). Asparagine 116 provides a ligand contact to anthranilate. Position 171 (arginine 171) interacts with anthranilate. The Mg(2+) site is built by aspartate 229 and glutamate 230.

The protein belongs to the anthranilate phosphoribosyltransferase family. As to quaternary structure, homodimer. Mg(2+) is required as a cofactor.

It catalyses the reaction N-(5-phospho-beta-D-ribosyl)anthranilate + diphosphate = 5-phospho-alpha-D-ribose 1-diphosphate + anthranilate. The protein operates within amino-acid biosynthesis; L-tryptophan biosynthesis; L-tryptophan from chorismate: step 2/5. Catalyzes the transfer of the phosphoribosyl group of 5-phosphorylribose-1-pyrophosphate (PRPP) to anthranilate to yield N-(5'-phosphoribosyl)-anthranilate (PRA). The chain is Anthranilate phosphoribosyltransferase from Shewanella amazonensis (strain ATCC BAA-1098 / SB2B).